The primary structure comprises 210 residues: Protein GrpE (210 aa).

The segment at 191-210 (KGGPKPAEAETNSVFDEKDA) is disordered.

The protein belongs to the GrpE family. In terms of assembly, homodimer.

Its subcellular location is the cytoplasm. Functionally, participates actively in the response to hyperosmotic and heat shock by preventing the aggregation of stress-denatured proteins, in association with DnaK and GrpE. It is the nucleotide exchange factor for DnaK and may function as a thermosensor. Unfolded proteins bind initially to DnaJ; upon interaction with the DnaJ-bound protein, DnaK hydrolyzes its bound ATP, resulting in the formation of a stable complex. GrpE releases ADP from DnaK; ATP binding to DnaK triggers the release of the substrate protein, thus completing the reaction cycle. Several rounds of ATP-dependent interactions between DnaJ, DnaK and GrpE are required for fully efficient folding. In Rhizobium etli (strain CIAT 652), this protein is Protein GrpE.